Here is a 595-residue protein sequence, read N- to C-terminus: Acriflavine sensitivity control protein acr-2 (595 aa).

Residues Cys-22 to Cys-49 constitute a DNA-binding region (zn(2)-C6 fungal-type). The span at Thr-69–Thr-88 shows a compositional bias: low complexity. A disordered region spans residues Thr-69–Gln-172. Positions Val-89–Pro-117 are enriched in polar residues. Residues Ser-118 to Thr-138 are compositionally biased toward low complexity.

The protein localises to the nucleus. Probable transcriptional regulator. This Neurospora crassa (strain ATCC 24698 / 74-OR23-1A / CBS 708.71 / DSM 1257 / FGSC 987) protein is Acriflavine sensitivity control protein acr-2 (acr-2).